Consider the following 625-residue polypeptide: Phosphomethylpyrimidine synthase (625 aa).

Substrate is bound by residues asparagine 231, methionine 260, tyrosine 289, histidine 325, 345–347 (SRG), 386–389 (DGLR), and glutamate 425. Residue histidine 429 participates in Zn(2+) binding. Tyrosine 452 lines the substrate pocket. Residue histidine 493 participates in Zn(2+) binding. Positions 573, 576, and 581 each coordinate [4Fe-4S] cluster.

The protein belongs to the ThiC family. In terms of assembly, homodimer. Requires [4Fe-4S] cluster as cofactor.

It carries out the reaction 5-amino-1-(5-phospho-beta-D-ribosyl)imidazole + S-adenosyl-L-methionine = 4-amino-2-methyl-5-(phosphooxymethyl)pyrimidine + CO + 5'-deoxyadenosine + formate + L-methionine + 3 H(+). It participates in cofactor biosynthesis; thiamine diphosphate biosynthesis. Catalyzes the synthesis of the hydroxymethylpyrimidine phosphate (HMP-P) moiety of thiamine from aminoimidazole ribotide (AIR) in a radical S-adenosyl-L-methionine (SAM)-dependent reaction. The sequence is that of Phosphomethylpyrimidine synthase from Acinetobacter baumannii (strain AB0057).